The sequence spans 344 residues: Glycerol-3-phosphate dehydrogenase [NAD(P)+] (344 aa).

NADPH is bound by residues Trp18, His38, and Lys115. Sn-glycerol 3-phosphate is bound by residues Lys115, Gly144, and Thr146. Ala148 provides a ligand contact to NADPH. Sn-glycerol 3-phosphate contacts are provided by Lys199, Asp252, Ser262, Arg263, and Asn264. The active-site Proton acceptor is the Lys199. Residue Arg263 coordinates NADPH. Residues Val288 and Glu290 each coordinate NADPH.

The protein belongs to the NAD-dependent glycerol-3-phosphate dehydrogenase family.

Its subcellular location is the cytoplasm. It carries out the reaction sn-glycerol 3-phosphate + NAD(+) = dihydroxyacetone phosphate + NADH + H(+). The catalysed reaction is sn-glycerol 3-phosphate + NADP(+) = dihydroxyacetone phosphate + NADPH + H(+). It functions in the pathway membrane lipid metabolism; glycerophospholipid metabolism. Catalyzes the reduction of the glycolytic intermediate dihydroxyacetone phosphate (DHAP) to sn-glycerol 3-phosphate (G3P), the key precursor for phospholipid synthesis. This is Glycerol-3-phosphate dehydrogenase [NAD(P)+] from Hydrogenovibrio crunogenus (strain DSM 25203 / XCL-2) (Thiomicrospira crunogena).